Here is a 484-residue protein sequence, read N- to C-terminus: UBX domain-containing protein 11 (484 aa).

A disordered region spans residues 1 to 28; sequence MSSPLASLSKTRKVPLESESVNPGRRGI. Residues 69 to 147 are a coiled coil; that stretch reads HDSELMASMT…IGEMERFLSD (79 aa). The SEP domain maps to 227-291; the sequence is LEPIPLKVYR…VSDLRNQIYP (65 aa). One can recognise a UBX domain in the interval 389–466; sequence PMPLLSMLRI…GLVPNATLLL (78 aa). S478 and S482 each carry phosphoserine.

Interacts with GNA12, GNA13, RND1, RND2 and RND3.

The protein localises to the cytoplasm. The protein resides in the cytoskeleton. May be involved in the reorganization of actin cytoskeleton mediated by RND1, RND2 and RND3. Promotes RHOA activation mediated by GNA12 and GNA13. In Mus musculus (Mouse), this protein is UBX domain-containing protein 11 (Ubxn11).